The primary structure comprises 451 residues: Vacuolar cation/proton exchanger 1a (451 aa).

At 1–58 (MEAAAAMEAGRKLAARHPHGRSRTAHNMSSSSLRKKSDAALVRKVPVAPLRPLLANLQ) the chain is on the cytoplasmic side. A disordered region spans residues 9–37 (AGRKLAARHPHGRSRTAHNMSSSSLRKKS). The segment covering 13–24 (LAARHPHGRSRT) has biased composition (basic residues). Residues 59-79 (EVFLATKLAVLFPAVPLAIAA) form a helical membrane-spanning segment. Over 80 to 86 (QCFRFDQ) the chain is Vacuolar. A helical transmembrane segment spans residues 87–107 (VWVFALSLLGLIPLAERVSFL). Over 108-120 (TEQIALYTGPTVG) the chain is Cytoplasmic. Residues 121–141 (GLLNATCGNATELIIALFALL) traverse the membrane as a helical segment. A cation selection region spans residues 128–163 (GNATELIIALFALLKGKIEVVKCSLLGSVLSNLLLV). The Vacuolar segment spans residues 142-153 (KGKIEVVKCSLL). Residues 154–174 (GSVLSNLLLVLGTSLFCGGVV) traverse the membrane as a helical segment. The Cytoplasmic portion of the chain corresponds to 175–191 (NLGARQPYDRNQSDVST). A helical transmembrane segment spans residues 192–212 (ALLFLAVLCHSAPLLLRYAVA). Over 213–228 (AGEHSVSATSAAASLD) the chain is Vacuolar. Residues 229-249 (LSRACSFVMLASYVAYLFFQL) form a helical membrane-spanning segment. The Cytoplasmic segment spans residues 250-273 (KTHRQLFEPQEVDGGDAGDDDEEP). The chain crosses the membrane as a helical span at residues 274–294 (ALGFASALFWLALMTAVISVL). At 295–317 (SEYVVGTIEPTSQSWGLSVSFIS) the chain is on the vacuolar side. The helical transmembrane segment at 318 to 338 (IILLPIVGNAAEHAGAIIFAL) threads the bilayer. The segment at 325–360 (GNAAEHAGAIIFALKNKLDITLGVALGSATQISMFV) is cation selection. At 339-352 (KNKLDITLGVALGS) the chain is on the cytoplasmic side. Residues 353–373 (ATQISMFVVPLSVLVAWIMGV) form a helical membrane-spanning segment. Topologically, residues 374–378 (QMDLD) are vacuolar. Residues 379–399 (FKLLETGSLFMAVLVTAFTLQ) traverse the membrane as a helical segment. Over 400–404 (DGTSH) the chain is Cytoplasmic. A helical membrane pass occupies residues 405–425 (YLKGILLLLCYIVIGACFFVA). The Vacuolar segment spans residues 426 to 451 (RQPAGHANSNGALLDVPTGSMSVQAA).

Belongs to the Ca(2+):cation antiporter (CaCA) (TC 2.A.19) family. Cation/proton exchanger (CAX) subfamily. In terms of tissue distribution, ubiquitous.

The protein resides in the vacuole membrane. Functionally, vacuolar cation/proton exchanger (CAX). Translocates Ca(2+) and other metal ions into vacuoles using the proton gradient formed by H(+)-ATPase and H(+)-pyrophosphatase. This is Vacuolar cation/proton exchanger 1a (CAX1a) from Oryza sativa subsp. japonica (Rice).